The chain runs to 523 residues: 2-isopropylmalate synthase (523 aa).

One can recognise a Pyruvate carboxyltransferase domain in the interval Val5–Trp267. Asp14, His202, His204, and Asn238 together coordinate Mn(2+). Residues Arg392–Val523 are regulatory domain.

Belongs to the alpha-IPM synthase/homocitrate synthase family. LeuA type 1 subfamily. As to quaternary structure, homodimer. Mn(2+) is required as a cofactor.

The protein resides in the cytoplasm. The catalysed reaction is 3-methyl-2-oxobutanoate + acetyl-CoA + H2O = (2S)-2-isopropylmalate + CoA + H(+). It participates in amino-acid biosynthesis; L-leucine biosynthesis; L-leucine from 3-methyl-2-oxobutanoate: step 1/4. In terms of biological role, catalyzes the condensation of the acetyl group of acetyl-CoA with 3-methyl-2-oxobutanoate (2-ketoisovalerate) to form 3-carboxy-3-hydroxy-4-methylpentanoate (2-isopropylmalate). The chain is 2-isopropylmalate synthase from Escherichia coli (strain K12 / MC4100 / BW2952).